The primary structure comprises 536 residues: T-complex protein 1 subunit delta (536 aa).

Residues 1 to 15 are compositionally biased toward polar residues; it reads MPEGKATSSASNTGK. A disordered region spans residues 1–26; it reads MPEGKATSSASNTGKNKGGAYQDRDK. G50 lines the ADP pocket. G50 is a binding site for ATP. D101 is a Mg(2+) binding site. Residues G102, T103, T104, S105, S170, K171, G422, and Q507 each coordinate ADP. ATP contacts are provided by G102 and T103. Residue K171 participates in ATP binding.

This sequence belongs to the TCP-1 chaperonin family. Component of the chaperonin-containing T-complex (TRiC), a hexadecamer composed of two identical back-to-back stacked rings enclosing a protein folding chamber. Each ring is made up of eight different subunits: TCP1/CCT1, CCT2, CCT3, CCT4, CCT5, CCT6A/CCT6, CCT7, CCT8.

It localises to the cytoplasm. The enzyme catalyses ATP + H2O = ADP + phosphate + H(+). Its function is as follows. Component of the chaperonin-containing T-complex (TRiC), a molecular chaperone complex that assists the folding of actin, tubulin and other proteins upon ATP hydrolysis. The chain is T-complex protein 1 subunit delta (cct4) from Takifugu rubripes (Japanese pufferfish).